A 200-amino-acid polypeptide reads, in one-letter code: Pyridoxal 5'-phosphate synthase subunit PdxT (200 aa).

Gly52–Ser54 is a binding site for L-glutamine. Catalysis depends on Cys84, which acts as the Nucleophile. L-glutamine is bound by residues Arg115 and Ile143–Arg144. Residues His179 and Glu181 each act as charge relay system in the active site.

The protein belongs to the glutaminase PdxT/SNO family. As to quaternary structure, in the presence of PdxS, forms a dodecamer of heterodimers. Only shows activity in the heterodimer.

It carries out the reaction aldehydo-D-ribose 5-phosphate + D-glyceraldehyde 3-phosphate + L-glutamine = pyridoxal 5'-phosphate + L-glutamate + phosphate + 3 H2O + H(+). The enzyme catalyses L-glutamine + H2O = L-glutamate + NH4(+). Its pathway is cofactor biosynthesis; pyridoxal 5'-phosphate biosynthesis. Its function is as follows. Catalyzes the hydrolysis of glutamine to glutamate and ammonia as part of the biosynthesis of pyridoxal 5'-phosphate. The resulting ammonia molecule is channeled to the active site of PdxS. In Methanosarcina barkeri (strain Fusaro / DSM 804), this protein is Pyridoxal 5'-phosphate synthase subunit PdxT.